Reading from the N-terminus, the 77-residue chain is Small ribosomal subunit protein bS20 (77 aa).

Residues 47–77 form a disordered region; sequence ASSSIDKAESKGLIHKNKASRDKARLAAKLG.

This sequence belongs to the bacterial ribosomal protein bS20 family.

In terms of biological role, binds directly to 16S ribosomal RNA. The polypeptide is Small ribosomal subunit protein bS20 (Streptococcus pyogenes serotype M1).